The following is a 674-amino-acid chain: tRNA 5-methylaminomethyl-2-thiouridine biosynthesis bifunctional protein MnmC (674 aa).

Residues 1–248 are tRNA (mnm(5)s(2)U34)-methyltransferase; that stretch reads MAASSLPSHN…KREMCFGRYA (248 aa). The FAD-dependent cmnm(5)s(2)U34 oxidoreductase stretch occupies residues 276–674; the sequence is IGAGLAGATV…AIRHWRSGKR (399 aa).

This sequence in the N-terminal section; belongs to the methyltransferase superfamily. tRNA (mnm(5)s(2)U34)-methyltransferase family. It in the C-terminal section; belongs to the DAO family. The cofactor is FAD.

The protein resides in the cytoplasm. It catalyses the reaction 5-aminomethyl-2-thiouridine(34) in tRNA + S-adenosyl-L-methionine = 5-methylaminomethyl-2-thiouridine(34) in tRNA + S-adenosyl-L-homocysteine + H(+). In terms of biological role, catalyzes the last two steps in the biosynthesis of 5-methylaminomethyl-2-thiouridine (mnm(5)s(2)U) at the wobble position (U34) in tRNA. Catalyzes the FAD-dependent demodification of cmnm(5)s(2)U34 to nm(5)s(2)U34, followed by the transfer of a methyl group from S-adenosyl-L-methionine to nm(5)s(2)U34, to form mnm(5)s(2)U34. In Hydrogenovibrio crunogenus (strain DSM 25203 / XCL-2) (Thiomicrospira crunogena), this protein is tRNA 5-methylaminomethyl-2-thiouridine biosynthesis bifunctional protein MnmC.